Consider the following 303-residue polypeptide: MPDHLSSLGDFTGEEIASLIARAIELKEERSRGIRHQQLAGKSVALIFEKPSTRTRVSFESAMYGLGGQVLFLSGRDTQLSRSEPLKDMARVMSRYVDGIVVRTFGQEVVNELAQYATVPVINALTDLHHPCQILSDIMTVIEKKGAIQDLKIVWVGDGNNMANSWIQAAAKLGFELILACPEGYDPDAEILAAAQAEGAKPITLLRDPQTAVLGADVINVDVFASMGQESEQDERLKIFASYQVNAEMMAKAADDAIVLHCLPAHRGEEITEDVLEGPQCVAFDEAENKMHMHKAILERFLG.

Residues 52–55 (STRT), Gln-79, Arg-103, and 130–133 (HPCQ) contribute to the carbamoyl phosphate site. L-ornithine-binding positions include Asn-161, Asp-222, and 226–227 (SM). Carbamoyl phosphate contacts are provided by residues 262-263 (CL) and Lys-290.

Belongs to the aspartate/ornithine carbamoyltransferase superfamily. OTCase family.

The protein localises to the cytoplasm. It carries out the reaction carbamoyl phosphate + L-ornithine = L-citrulline + phosphate + H(+). The protein operates within amino-acid biosynthesis; L-arginine biosynthesis; L-arginine from L-ornithine and carbamoyl phosphate: step 1/3. Its function is as follows. Reversibly catalyzes the transfer of the carbamoyl group from carbamoyl phosphate (CP) to the N(epsilon) atom of ornithine (ORN) to produce L-citrulline. This is Ornithine carbamoyltransferase from Desulfotalea psychrophila (strain LSv54 / DSM 12343).